The primary structure comprises 605 residues: Capsid scaffolding protein (605 aa).

Active-site charge relay system residues include H52, S120, and H139. The interval 326-344 is interaction with pAP; that stretch reads GEFVLIPTAYYSQLLTGQT. Residues 585 to 605 form an interaction with major capsid protein region; sequence IQGSTADDADMFANQMMVGRC.

This sequence belongs to the herpesviridae capsid scaffolding protein family. As to quaternary structure, homomultimer. Interacts with major capsid protein. In terms of assembly, exists in a monomer-dimer equilibrium with the dimer being the active species. In terms of processing, capsid scaffolding protein is cleaved by assemblin after formation of the spherical procapsid. As a result, the capsid obtains its mature, icosahedral shape. Cleavages occur at two or more sites: release (R-site) and maturation (M-site).

It localises to the host cytoplasm. It is found in the host nucleus. It catalyses the reaction Cleaves -Ala-|-Ser- and -Ala-|-Ala- bonds in the scaffold protein.. Functionally, acts as a scaffold protein by binding major capsid protein in the cytoplasm, inducing the nuclear localization of both proteins. Multimerizes in the nucleus such as major capsid protein forms the icosahedral T=16 capsid. Autocatalytic cleavage releases the assembly protein, and subsequently abolishes interaction with major capsid protein. Cleavages products are evicted from the capsid before or during DNA packaging. Protease that plays an essential role in virion assembly within the nucleus. Catalyzes the cleavage of the assembly protein after formation of the spherical procapsid. By that cleavage, the capsid matures and gains its icosahedral shape. The cleavage sites seem to include -Ala-Ser-, -Ala-Ala-, as well as Ala-Thr bonds. Assemblin and cleavages products are evicted from the capsid before or during DNA packaging. Its function is as follows. Plays a major role in capsid assembly. Acts as a scaffold protein by binding major capsid protein. Multimerizes in the nucleus such as major capsid protein forms the icosahedral T=16 capsid. Cleaved by assemblin after capsid completion. The cleavages products are evicted from the capsid before or during DNA packaging. The chain is Capsid scaffolding protein (33) from Varicella-zoster virus (strain Dumas) (HHV-3).